Reading from the N-terminus, the 345-residue chain is N-glycosylase/DNA lyase (345 aa).

Residues N149, R154, and R204 each contribute to the DNA site. K249 (schiff-base intermediate with DNA) is an active-site residue. Residues P266 and D268 each contribute to the 8-oxoguanine site. 2 residues coordinate DNA: H270 and Q287. 8-oxoguanine is bound by residues Q315 and F319.

The protein belongs to the type-1 OGG1 family. Highest expression in testis.

The protein resides in the nucleus. Its subcellular location is the nucleoplasm. It is found in the nucleus speckle. The protein localises to the nucleus matrix. The catalysed reaction is 2'-deoxyribonucleotide-(2'-deoxyribose 5'-phosphate)-2'-deoxyribonucleotide-DNA = a 3'-end 2'-deoxyribonucleotide-(2,3-dehydro-2,3-deoxyribose 5'-phosphate)-DNA + a 5'-end 5'-phospho-2'-deoxyribonucleoside-DNA + H(+). Its function is as follows. DNA repair enzyme that incises DNA at 8-oxoG residues. Excises 7,8-dihydro-8-oxoguanine and 2,6-diamino-4-hydroxy-5-N-methylformamidopyrimidine (FAPY) from damaged DNA. Has a beta-lyase activity that nicks DNA 3' to the lesion. This chain is N-glycosylase/DNA lyase (Ogg1), found in Mus musculus (Mouse).